We begin with the raw amino-acid sequence, 276 residues long: MDAESLLLALELASGSGQGLSPDRRASLLTSLMLVKRDYRFDRVLFWGRILGLVADYYIAQGVSEDQLAPRKTLYSLNCMEWSLLPPATKEMETQTSVVKGRFMGDPSHEYEHTELQKVNEGEKVFEEEVVVQIKEETRLVSVIDQIDKAVAVIPRGALFKTPFGPINVNRTFEGLSLSEAKKLSSYFHFREPVELKNKTLLEKAELDPSLDFMDSLEHDIPKGSWSVQMERGNALVVLRSLLWPGLTFYHAPRTKNYGYIYVGTGEKNLDLPFML.

The protein belongs to the flagellar radial spoke RSP9 family. As to quaternary structure, component of the axonemal radial spoke 1 (RS1) and 2 (RS2) complexes, at least composed of spoke head proteins RSPH1, RSPH3, RSPH9 and the cilia-specific component RSPH4A or sperm-specific component RSPH6A, spoke stalk proteins RSPH14, DNAJB13, DYDC1, ROPN1L and NME5, and the RS1 complex-specific anchor protein IQUB. Interacts with IQUB. Interacts with RSPH3B. Interacts with RSPH4A. Interacts with RSPH6A. Interacts with CFAP61. Interacts with LRRC23.

It is found in the cytoplasm. The protein localises to the cytoskeleton. Its subcellular location is the cilium axoneme. The protein resides in the flagellum axoneme. It localises to the cell projection. It is found in the kinocilium. Its function is as follows. Functions as part of axonemal radial spoke complexes that play an important part in the motility of sperm and cilia. Essential for both the radial spoke head assembly and the central pair microtubule stability in ependymal motile cilia. Required for motility of olfactory and neural cilia and for the structural integrity of ciliary axonemes in both 9+0 and 9+2 motile cilia. The chain is Radial spoke head protein 9 homolog (RSPH9) from Bos taurus (Bovine).